The sequence spans 176 residues: Xanthine-guanine phosphoribosyltransferase (176 aa).

Residues 51 to 52, R88, and 111 to 119 contribute to the 5-phospho-alpha-D-ribose 1-diphosphate site; these read RG and DDLVDSGKT. R88 provides a ligand contact to GMP. D112 provides a ligand contact to Mg(2+). Guanine-binding residues include D115 and I158. Xanthine contacts are provided by D115 and I158. GMP contacts are provided by residues 115 to 119 and 157 to 158; these read DSGKT and WI.

This sequence belongs to the purine/pyrimidine phosphoribosyltransferase family. XGPT subfamily. Homotetramer. It depends on Mg(2+) as a cofactor.

It localises to the cell inner membrane. The catalysed reaction is GMP + diphosphate = guanine + 5-phospho-alpha-D-ribose 1-diphosphate. It carries out the reaction XMP + diphosphate = xanthine + 5-phospho-alpha-D-ribose 1-diphosphate. It catalyses the reaction IMP + diphosphate = hypoxanthine + 5-phospho-alpha-D-ribose 1-diphosphate. It participates in purine metabolism; GMP biosynthesis via salvage pathway; GMP from guanine: step 1/1. The protein operates within purine metabolism; XMP biosynthesis via salvage pathway; XMP from xanthine: step 1/1. Functionally, purine salvage pathway enzyme that catalyzes the transfer of the ribosyl-5-phosphate group from 5-phospho-alpha-D-ribose 1-diphosphate (PRPP) to the N9 position of the 6-oxopurines guanine and xanthine to form the corresponding ribonucleotides GMP (guanosine 5'-monophosphate) and XMP (xanthosine 5'-monophosphate), with the release of PPi. To a lesser extent, also acts on hypoxanthine. The chain is Xanthine-guanine phosphoribosyltransferase from Roseobacter denitrificans (strain ATCC 33942 / OCh 114) (Erythrobacter sp. (strain OCh 114)).